The primary structure comprises 109 residues: DNA-binding protein MJ0691 (109 aa).

It belongs to the PDCD5 family.

In Methanocaldococcus jannaschii (strain ATCC 43067 / DSM 2661 / JAL-1 / JCM 10045 / NBRC 100440) (Methanococcus jannaschii), this protein is DNA-binding protein MJ0691.